The chain runs to 177 residues: Large ribosomal subunit protein uL6 (177 aa).

The protein belongs to the universal ribosomal protein uL6 family. Part of the 50S ribosomal subunit.

Functionally, this protein binds to the 23S rRNA, and is important in its secondary structure. It is located near the subunit interface in the base of the L7/L12 stalk, and near the tRNA binding site of the peptidyltransferase center. The sequence is that of Large ribosomal subunit protein uL6 from Leptothrix cholodnii (strain ATCC 51168 / LMG 8142 / SP-6) (Leptothrix discophora (strain SP-6)).